Consider the following 438-residue polypeptide: Ubiquitin carboxyl-terminal hydrolase 27 (438 aa).

A USP domain is found at 78 to 421 (RGLINLGNTC…EGYLLFYHKQ (344 aa)). C87 acts as the Nucleophile in catalysis. Catalysis depends on H380, which acts as the Proton acceptor.

It belongs to the peptidase C19 family. Interacts with phosphorylated BCL2L11 isoform BIMEL; this interaction leads to BCL2L11 deubiquitination and stabilization.

The protein localises to the cytoplasm. It localises to the cytosol. The protein resides in the nucleus. The enzyme catalyses Thiol-dependent hydrolysis of ester, thioester, amide, peptide and isopeptide bonds formed by the C-terminal Gly of ubiquitin (a 76-residue protein attached to proteins as an intracellular targeting signal).. Functionally, deubiquitinase involved in innate antiviral immunity by mediating deubiquitination of CGAS and RIGI. Negatively regulates RIGI by mediating 'Lys-63'-linked deubiquitination of RIGI, inhibiting type I interferon signaling. Also regulates 'Lys-63'-linked ubiquitination level of MDA5/IFIH1. Acts as a positive regulator of the cGAS-STING pathway by catalyzing 'Lys-48'-linked deubiquitination of CGAS, thereby promoting its stabilization. Can reduce the levels of BCL2L11/BIM ubiquitination and stabilize BCL2L11 in response to the RAF-MAPK-degradation signal. By acting on BCL2L11 levels, may counteract the anti-apoptotic effects of MAPK activity. This Mus musculus (Mouse) protein is Ubiquitin carboxyl-terminal hydrolase 27.